The primary structure comprises 280 residues: Adenosylcobinamide-GDP ribazoletransferase (280 aa).

The next 6 membrane-spanning stretches (helical) occupy residues 4 to 24 (YLLA…GISM), 39 to 59 (VVGA…QVIF), 61 to 81 (GPVL…FNHL), 108 to 128 (TIGT…YGSI), 196 to 216 (FLIG…WIGL), and 255 to 275 (TALI…MGGF).

The protein belongs to the CobS family. It depends on Mg(2+) as a cofactor.

It localises to the cell membrane. It catalyses the reaction alpha-ribazole + adenosylcob(III)inamide-GDP = adenosylcob(III)alamin + GMP + H(+). The catalysed reaction is alpha-ribazole 5'-phosphate + adenosylcob(III)inamide-GDP = adenosylcob(III)alamin 5'-phosphate + GMP + H(+). It functions in the pathway cofactor biosynthesis; adenosylcobalamin biosynthesis; adenosylcobalamin from cob(II)yrinate a,c-diamide: step 7/7. Its function is as follows. Joins adenosylcobinamide-GDP and alpha-ribazole to generate adenosylcobalamin (Ado-cobalamin). Also synthesizes adenosylcobalamin 5'-phosphate from adenosylcobinamide-GDP and alpha-ribazole 5'-phosphate. The protein is Adenosylcobinamide-GDP ribazoletransferase of Methanosarcina barkeri (strain Fusaro / DSM 804).